The chain runs to 1158 residues: Hephaestin (1158 aa).

A signal peptide spans 1 to 23 (MESGHLLWALLFMQSLWPQLTDG). 6 Plastocyanin-like domains span residues 24-206 (ATRV…LITC), 218-366 (QRQD…VKSC), 370-560 (PPVD…LLVC), 570-718 (KQKG…VSQC), 731-903 (AARI…LAIC), and 911-1067 (HGGR…SRTE). At 24–1110 (ATRVYYLGIR…PIKNVEMLAS (1087 aa)) the chain is on the extracellular side. Residues Gly70 and Tyr73 each contribute to the Na(+) site. Cu(2+) contacts are provided by His126 and His128. Position 126 (His126) interacts with O2. Ca(2+) contacts are provided by Lys134, Asp152, and Asp153. Asn164 carries N-linked (GlcNAc...) asparagine glycosylation. Cys180 and Cys206 form a disulfide bridge. The Cu(2+) site is built by His186 and His188. His186 is a binding site for O2. The N-linked (GlcNAc...) asparagine glycan is linked to Asn236. Ser265 is a Na(+) binding site. Cys285 and Cys366 are oxidised to a cystine. Cu(2+) contacts are provided by His304, Cys347, and His352. Positions 416, 425, and 428 each coordinate Na(+). Cysteines 534 and 560 form a disulfide. The N-linked (GlcNAc...) asparagine glycan is linked to Asn588. Residue Ser617 participates in Na(+) binding. The cysteines at positions 637 and 718 are disulfide-linked. 4 residues coordinate Cu(2+): His656, Cys699, His704, and Met709. N-linked (GlcNAc...) asparagine glycans are attached at residues Asn714 and Asn758. 2 residues coordinate Na(+): Phe769 and Gly778. N-linked (GlcNAc...) asparagine glycosylation is found at Asn829 and Asn873. Cysteines 877 and 903 form a disulfide. N-linked (GlcNAc...) asparagine glycosylation is present at Asn931. Residues His1000, His1003, His1005, His1045, Cys1046, His1047, His1051, and Met1056 each coordinate Cu(2+). Positions 1003 and 1005 each coordinate O2. Residue His1047 participates in O2 binding. A helical membrane pass occupies residues 1111-1131 (VLVAISVTLLLVVLALGGVVW). At 1132–1158 (YQHRQRKLRRNRRSILDDSFKLLSFKQ) the chain is on the cytoplasmic side. Phosphoserine occurs at positions 1145, 1150, and 1155.

This sequence belongs to the multicopper oxidase family. As to quaternary structure, part of a complex composed of SLC40A1/ferroportin, TF/transferrin and HEPH/hephaestin that transfers iron from cells to transferrin. Cu cation is required as a cofactor. As to expression, expressed by intestinal absorptive cells (at protein level). Also detected in breast, colon, bone trabecular cells and fibroblasts.

The protein localises to the basolateral cell membrane. It catalyses the reaction 4 Fe(2+) + O2 + 4 H(+) = 4 Fe(3+) + 2 H2O. Plasma membrane ferroxidase that mediates the extracellular conversion of ferrous/Fe(2+) iron into its ferric/Fe(3+) form. Couples ferroportin which specifically exports ferrous/Fe(2+) iron from cells to transferrin that only binds and shuttles extracellular ferric/Fe(3+) iron throughout the body. By helping iron transfer from cells to blood mainly contributes to dietary iron absorption by the intestinal epithelium and more generally regulates iron levels in the body. In Homo sapiens (Human), this protein is Hephaestin.